The primary structure comprises 440 residues: Thymidine phosphorylase (440 aa).

It belongs to the thymidine/pyrimidine-nucleoside phosphorylase family. As to quaternary structure, homodimer.

It carries out the reaction thymidine + phosphate = 2-deoxy-alpha-D-ribose 1-phosphate + thymine. Its pathway is pyrimidine metabolism; dTMP biosynthesis via salvage pathway; dTMP from thymine: step 1/2. Functionally, the enzymes which catalyze the reversible phosphorolysis of pyrimidine nucleosides are involved in the degradation of these compounds and in their utilization as carbon and energy sources, or in the rescue of pyrimidine bases for nucleotide synthesis. This is Thymidine phosphorylase from Yersinia pestis.